The primary structure comprises 702 residues: Ribosomal RNA large subunit methyltransferase K/L (702 aa).

The region spanning 43-154 is the THUMP domain; the sequence is LVYQSLMWSR…KETASIALDL (112 aa).

This sequence belongs to the methyltransferase superfamily. RlmKL family.

It localises to the cytoplasm. The enzyme catalyses guanosine(2445) in 23S rRNA + S-adenosyl-L-methionine = N(2)-methylguanosine(2445) in 23S rRNA + S-adenosyl-L-homocysteine + H(+). It catalyses the reaction guanosine(2069) in 23S rRNA + S-adenosyl-L-methionine = N(2)-methylguanosine(2069) in 23S rRNA + S-adenosyl-L-homocysteine + H(+). Its function is as follows. Specifically methylates the guanine in position 2445 (m2G2445) and the guanine in position 2069 (m7G2069) of 23S rRNA. The chain is Ribosomal RNA large subunit methyltransferase K/L from Escherichia coli (strain K12 / DH10B).